A 714-amino-acid chain; its full sequence is Epithelial splicing regulatory protein 1 (714 aa).

RRM domains lie at 225-302 (TVIR…KATG), 326-406 (IIVR…KSTA), and 450-530 (DCVR…ACSA).

It belongs to the ESRP family.

It is found in the nucleus. Functionally, mRNA splicing factor that regulates the formation of epithelial cell-specific isoforms. Specifically regulates the expression of FGFR2-IIIb, an epithelial cell-specific isoform of fgfr2. Acts by directly binding specific sequences in mRNAs. Binds the GU-rich sequence motifs in the ISE/ISS-3, a cis-element regulatory region present in the mRNA of fgfr2. This Danio rerio (Zebrafish) protein is Epithelial splicing regulatory protein 1 (esrp1).